The chain runs to 954 residues: Valine--tRNA ligase (954 aa).

The short motif at 48–58 (PNVTGSLHMGH) is the 'HIGH' region element. The short motif at 560–564 (KMSKS) is the 'KMSKS' region element. Lysine 563 is a binding site for ATP. Positions 886–954 (INKDTELARL…RAQYLSIENL (69 aa)) form a coiled coil.

This sequence belongs to the class-I aminoacyl-tRNA synthetase family. ValS type 1 subfamily. Monomer.

It localises to the cytoplasm. The catalysed reaction is tRNA(Val) + L-valine + ATP = L-valyl-tRNA(Val) + AMP + diphosphate. In terms of biological role, catalyzes the attachment of valine to tRNA(Val). As ValRS can inadvertently accommodate and process structurally similar amino acids such as threonine, to avoid such errors, it has a 'posttransfer' editing activity that hydrolyzes mischarged Thr-tRNA(Val) in a tRNA-dependent manner. The polypeptide is Valine--tRNA ligase (Mannheimia succiniciproducens (strain KCTC 0769BP / MBEL55E)).